Consider the following 539-residue polypeptide: Phosphoenolpyruvate carboxykinase (ATP) (539 aa).

Substrate contacts are provided by arginine 64, tyrosine 206, and lysine 212. ATP-binding positions include lysine 212, histidine 231, and 247–255 (GLSGTGKTT). Residues lysine 212 and histidine 231 each contribute to the Mn(2+) site. Aspartate 268 is a binding site for Mn(2+). ATP is bound by residues glutamate 296, arginine 332, 448-449 (RI), and threonine 454. Arginine 332 is a substrate binding site.

It belongs to the phosphoenolpyruvate carboxykinase (ATP) family. Monomer. Mn(2+) serves as cofactor.

The protein localises to the cytoplasm. It catalyses the reaction oxaloacetate + ATP = phosphoenolpyruvate + ADP + CO2. It functions in the pathway carbohydrate biosynthesis; gluconeogenesis. In terms of biological role, involved in the gluconeogenesis. Catalyzes the conversion of oxaloacetate (OAA) to phosphoenolpyruvate (PEP) through direct phosphoryl transfer between the nucleoside triphosphate and OAA. The protein is Phosphoenolpyruvate carboxykinase (ATP) of Yersinia pseudotuberculosis serotype O:1b (strain IP 31758).